A 570-amino-acid polypeptide reads, in one-letter code: Protein HEATR9 (570 aa).

This Homo sapiens (Human) protein is Protein HEATR9 (HEATR9).